The following is a 117-amino-acid chain: Large ribosomal subunit protein bL20 (117 aa).

The protein belongs to the bacterial ribosomal protein bL20 family.

In terms of biological role, binds directly to 23S ribosomal RNA and is necessary for the in vitro assembly process of the 50S ribosomal subunit. It is not involved in the protein synthesizing functions of that subunit. The protein is Large ribosomal subunit protein bL20 of Gloeothece citriformis (strain PCC 7424) (Cyanothece sp. (strain PCC 7424)).